The chain runs to 33 residues: Cytochrome b6-f complex subunit 8 (33 aa).

The chain crosses the membrane as a helical span at residues 2 to 22 (LFTFAWASLAAIFTFSIAMVV).

The protein belongs to the PetN family. In terms of assembly, the 4 large subunits of the cytochrome b6-f complex are cytochrome b6, subunit IV (17 kDa polypeptide, PetD), cytochrome f and the Rieske protein, while the 4 small subunits are PetG, PetL, PetM and PetN. The complex functions as a dimer.

The protein resides in the cellular thylakoid membrane. Component of the cytochrome b6-f complex, which mediates electron transfer between photosystem II (PSII) and photosystem I (PSI), cyclic electron flow around PSI, and state transitions. The protein is Cytochrome b6-f complex subunit 8 of Prochlorococcus marinus (strain MIT 9211).